The primary structure comprises 101 residues: Small ribosomal subunit protein uS14 (101 aa).

Belongs to the universal ribosomal protein uS14 family. In terms of assembly, part of the 30S ribosomal subunit. Contacts proteins S3 and S10.

Binds 16S rRNA, required for the assembly of 30S particles and may also be responsible for determining the conformation of the 16S rRNA at the A site. This is Small ribosomal subunit protein uS14 from Kocuria rhizophila (strain ATCC 9341 / DSM 348 / NBRC 103217 / DC2201).